A 392-amino-acid chain; its full sequence is NADH-quinone oxidoreductase subunit D (392 aa).

Belongs to the complex I 49 kDa subunit family. As to quaternary structure, NDH-1 is composed of 14 different subunits. Subunits NuoB, C, D, E, F, and G constitute the peripheral sector of the complex.

The protein localises to the cell inner membrane. The enzyme catalyses a quinone + NADH + 5 H(+)(in) = a quinol + NAD(+) + 4 H(+)(out). In terms of biological role, NDH-1 shuttles electrons from NADH, via FMN and iron-sulfur (Fe-S) centers, to quinones in the respiratory chain. The immediate electron acceptor for the enzyme in this species is believed to be ubiquinone. Couples the redox reaction to proton translocation (for every two electrons transferred, four hydrogen ions are translocated across the cytoplasmic membrane), and thus conserves the redox energy in a proton gradient. The polypeptide is NADH-quinone oxidoreductase subunit D (Parvibaculum lavamentivorans (strain DS-1 / DSM 13023 / NCIMB 13966)).